Reading from the N-terminus, the 62-residue chain is Cobrotoxin II (62 aa).

Polar residues predominate over residues 1–16; sequence LECHNQQSSQTPTTTG. The tract at residues 1–23 is disordered; the sequence is LECHNQQSSQTPTTTGCSGGENN. Cystine bridges form between Cys-3/Cys-24, Cys-17/Cys-41, Cys-43/Cys-54, and Cys-55/Cys-60.

The protein belongs to the three-finger toxin family. Short-chain subfamily. Type I alpha-neurotoxin sub-subfamily. In terms of tissue distribution, expressed by the venom gland.

Its subcellular location is the secreted. Functionally, binds to muscle nicotinic acetylcholine receptor (nAChR) and inhibit acetylcholine from binding to the receptor, thereby impairing neuromuscular transmission. The chain is Cobrotoxin II from Naja kaouthia (Monocled cobra).